The chain runs to 916 residues: Extracellular signal-regulated kinase 7 (916 aa).

The 295-residue stretch at 25–319 folds into the Protein kinase domain; the sequence is FDVRKRMGKG…AKEAIRHPYV (295 aa). Residues 31-39 and Lys54 each bind ATP; that span reads MGKGAYGIV. Asp149 (proton acceptor) is an active-site residue. 2 stretches are compositionally biased toward polar residues: residues 364–376 and 390–403; these read CSNR…TPSS and QART…TTSP. 6 disordered regions span residues 364-419, 452-477, 588-608, 711-742, 792-813, and 883-916; these read CSNR…TQSR, PPAA…KSVP, PSET…QMKR, KKLQ…SQNY, ELNP…PGRD, and CRHR…PESN. Basic and acidic residues-rich tracts occupy residues 590–608, 715–730, and 800–811; these read ETEH…QMKR, RSKE…RRAL, and GGRDSGSEHSPG. Residues 883 to 892 show a composition bias toward basic residues; sequence CRHRHHKPNH. Residues 894 to 903 show a composition bias toward basic and acidic residues; that stretch reads APYDHMRPTE.

This sequence belongs to the protein kinase superfamily. Ser/Thr protein kinase family.

It carries out the reaction L-seryl-[protein] + ATP = O-phospho-L-seryl-[protein] + ADP + H(+). The enzyme catalyses L-threonyl-[protein] + ATP = O-phospho-L-threonyl-[protein] + ADP + H(+). In terms of biological role, atypical MAPK protein that regulates protein secretion in a kinase activity-dependent manner. In response to starvation regulates protein secretion by mediating transitional endoplasmic reticulum site disassembly. Mediates inhibition of insulin-like peptide secretion upon disturbed ribosome biogenesis and acts as a downstream effector of TP53. This chain is Extracellular signal-regulated kinase 7, found in Drosophila melanogaster (Fruit fly).